The chain runs to 106 residues: NADH-quinone oxidoreductase subunit K (106 aa).

Transmembrane regions (helical) follow at residues 9–29 (LGHY…GIFL), 35–55 (IVML…MVAF), and 70–90 (FILT…VIYF).

Belongs to the complex I subunit 4L family. NDH-1 is composed of 14 different subunits. Subunits NuoA, H, J, K, L, M, N constitute the membrane sector of the complex.

It is found in the cell inner membrane. The enzyme catalyses a quinone + NADH + 5 H(+)(in) = a quinol + NAD(+) + 4 H(+)(out). In terms of biological role, NDH-1 shuttles electrons from NADH, via FMN and iron-sulfur (Fe-S) centers, to quinones in the respiratory chain. The immediate electron acceptor for the enzyme in this species is believed to be ubiquinone. Couples the redox reaction to proton translocation (for every two electrons transferred, four hydrogen ions are translocated across the cytoplasmic membrane), and thus conserves the redox energy in a proton gradient. The chain is NADH-quinone oxidoreductase subunit K from Granulibacter bethesdensis (strain ATCC BAA-1260 / CGDNIH1).